The sequence spans 886 residues: uncharacterized protein (886 aa).

Residues 1 to 20 (MKIIKSLILLVLFMASPAKG) form the signal peptide. The next 5 helical transmembrane spans lie at 520–540 (VTIFGLMFVLGALKLTAVEVV), 609–629 (LLFIQLLQIHNGLAFIVIITI), 647–667 (VIAFIGLTVMISLAPFFIILM), 680–700 (ISILFSYVVQPTILLIFFLLI), and 779–799 (LLFYSYCLMSYGLVSFVTIVV). The disordered stretch occupies residues 856–886 (EARKPQGGGEHTGKFFQNRNDVKPEQTERND). Positions 875–886 (NDVKPEQTERND) are enriched in basic and acidic residues.

This sequence belongs to the TrbL/VirB6 family.

Its subcellular location is the cell membrane. This is an uncharacterized protein from Rickettsia bellii (strain RML369-C).